The primary structure comprises 213 residues: Pyridoxine/pyridoxamine 5'-phosphate oxidase (213 aa).

Residues 8–11 (RREY) and K67 each bind substrate. Residues 62-67 (RIVLLK), 77-78 (FT), R83, K84, and Q106 contribute to the FMN site. The substrate site is built by Y124, R128, and S132. FMN is bound by residues 141-142 (QS) and W186. Residue 192-194 (RLH) coordinates substrate. R196 lines the FMN pocket.

It belongs to the pyridoxamine 5'-phosphate oxidase family. In terms of assembly, homodimer. FMN serves as cofactor.

The enzyme catalyses pyridoxamine 5'-phosphate + O2 + H2O = pyridoxal 5'-phosphate + H2O2 + NH4(+). The catalysed reaction is pyridoxine 5'-phosphate + O2 = pyridoxal 5'-phosphate + H2O2. It participates in cofactor metabolism; pyridoxal 5'-phosphate salvage; pyridoxal 5'-phosphate from pyridoxamine 5'-phosphate: step 1/1. The protein operates within cofactor metabolism; pyridoxal 5'-phosphate salvage; pyridoxal 5'-phosphate from pyridoxine 5'-phosphate: step 1/1. Catalyzes the oxidation of either pyridoxine 5'-phosphate (PNP) or pyridoxamine 5'-phosphate (PMP) into pyridoxal 5'-phosphate (PLP). This chain is Pyridoxine/pyridoxamine 5'-phosphate oxidase, found in Shewanella woodyi (strain ATCC 51908 / MS32).